We begin with the raw amino-acid sequence, 312 residues long: Small kinetochore-associated protein (312 aa).

Residues 1 to 171 (MAAPEAEAQE…PFNKQKPEEE (171 aa)) are disordered. Residues 131-143 (DVTKVTKSRRENG) are compositionally biased toward basic and acidic residues. Positions 156 to 312 (LRNSYKPFNK…LEEMEQLLEM (157 aa)) are interaction with SPAG5. Coiled coils occupy residues 166 to 210 (QKPE…LEKF) and 246 to 287 (LLET…QFLE).

In terms of assembly, part of an astrin (SPAG5)-kinastrin (SKAP) complex containing KNSTRN, SPAG5, PLK1, DYNLL1 and SGO2A. Interacts with SPAG5. Directly binds to microtubules, although at relatively low affinity. Interacts with CENPE; this interaction greatly favors microtubule-binding. Interacts with DSN1/MIS13; leading to localization to kinetochores. Interacts with MAPRE1/EB1; leading to localization to the microtubule plus ends. Interacts with PRPF19. Interacts with DYNLL1. Interacts with MAP4.

It localises to the nucleus. It is found in the chromosome. The protein resides in the centromere. The protein localises to the kinetochore. Its subcellular location is the cytoplasm. It localises to the cytoskeleton. It is found in the spindle pole. The protein resides in the microtubule organizing center. Essential component of the mitotic spindle required for faithful chromosome segregation and progression into anaphase. Promotes the metaphase-to-anaphase transition and is required for chromosome alignment, normal timing of sister chromatid segregation, and maintenance of spindle pole architecture. The astrin (SPAG5)-kinastrin (SKAP) complex promotes stable microtubule-kinetochore attachments. Required for kinetochore oscillations and dynamics of microtubule plus-ends during live cell mitosis, possibly by forming a link between spindle microtubule plus-ends and mitotic chromosomes to achieve faithful cell division. The polypeptide is Small kinetochore-associated protein (Knstrn) (Mus musculus (Mouse)).